A 679-amino-acid polypeptide reads, in one-letter code: Methyl-accepting chemotaxis protein McpB (679 aa).

3 divergent domain HAMP regions span residues 8–56, 63–112, and 111–156; these read AVAQ…RQLR, QQVE…AAHI, and HIAV…ERLR. In terms of domain architecture, PAS spans 171 to 213; that stretch reads YNARIKSALDNVSANVMIADNDLNIIYMNRTVSEMLGRAEADI. His-234 provides a ligand contact to heme. Positions 285 to 287 match the DxT. Important for signal propagation motif; the sequence is DRT. The divergent domain HAMP 4 stretch occupies residues 289–332; sequence EHRAEQEVSQLVQAAAAGDFSKRVEEAGKEGFFLRLAKDLNSLV. The HAMP 5 domain maps to 333–385; that stretch reads DTADRGLRDVSRMLGALAQGDLTQRIEADYQGTFGQLKDFSNDTAQSLSRMLG. The 230-residue stretch at 390–619 folds into the Methyl-accepting transducer domain; the sequence is AADTINTAAS…EAAAAAEAMQ (230 aa). Disordered stretches follow at residues 405–425 and 644–679; these read NAELSARTEQQASSLEETASS and ASARPSAPRPSAPAPLARSGMARASKARKEDGWEEF. Residues 411-425 are compositionally biased toward polar residues; sequence RTEQQASSLEETASS. The span at 670–679 shows a compositional bias: basic and acidic residues; the sequence is ARKEDGWEEF. Residues 675-679 carry the GWEEF pentapeptide. Important for methylation by CheR2 motif; that stretch reads GWEEF.

It belongs to the methyl-accepting chemotaxis (MCP) protein family. Homodimer. The PAS domains form dimers in the presence and absence of oxygen. Interacts with the methyltransferase CheR2 via the C-terminal McpB pentapeptide GWEEF. Interacts with the methylesterase/gutaminase CheB2, which also binds to the GWEEF pentapeptide. Methylated by CheR2, but not by CheR1, CheR3 or WspC. Demethylated by CheB2. In vitro, can be methylated by E.coli CheR.

The protein resides in the cytoplasm. Its function is as follows. Chemoreceptor that plays a critical role in the virulence and pathogenesis of P.aeruginosa in a variety of hosts. Probably acts through oxygen sensing. Uses a heme-based sensor. Could be involved in chemotaxis. When expressed in E.coli, is able to sense and mediate repellent responses to oxygen, carbon monoxide and nitric oxide. This chain is Methyl-accepting chemotaxis protein McpB, found in Pseudomonas aeruginosa (strain ATCC 15692 / DSM 22644 / CIP 104116 / JCM 14847 / LMG 12228 / 1C / PRS 101 / PAO1).